The following is a 541-amino-acid chain: Protein yellow (541 aa).

The signal sequence occupies residues 1–21 (MFQDKGWILVTLITLVTPSWA). 2 N-linked (GlcNAc...) asparagine glycosylation sites follow: Asn-144 and Asn-215. The segment at 443-463 (QKPQTSWASSPPPPSRTYLPA) is disordered.

The protein belongs to the major royal jelly protein family.

It localises to the secreted. In terms of biological role, controls the pigmentation pattern of the adult cuticle and larval mouth parts. The sequence is that of Protein yellow (y) from Drosophila mauritiana (Fruit fly).